A 404-amino-acid chain; its full sequence is Cysteine desulfurase IscS (404 aa).

Residues 75–76 (AT), N155, Q183, and 203–205 (SAH) contribute to the pyridoxal 5'-phosphate site. K206 is subject to N6-(pyridoxal phosphate)lysine. Residue T243 coordinates pyridoxal 5'-phosphate. C328 serves as the catalytic Cysteine persulfide intermediate. C328 lines the [2Fe-2S] cluster pocket.

Belongs to the class-V pyridoxal-phosphate-dependent aminotransferase family. NifS/IscS subfamily. Homodimer. Forms a heterotetramer with IscU, interacts with other sulfur acceptors. It depends on pyridoxal 5'-phosphate as a cofactor.

The protein localises to the cytoplasm. It carries out the reaction (sulfur carrier)-H + L-cysteine = (sulfur carrier)-SH + L-alanine. Its pathway is cofactor biosynthesis; iron-sulfur cluster biosynthesis. Master enzyme that delivers sulfur to a number of partners involved in Fe-S cluster assembly, tRNA modification or cofactor biosynthesis. Catalyzes the removal of elemental sulfur atoms from cysteine to produce alanine. Functions as a sulfur delivery protein for Fe-S cluster synthesis onto IscU, an Fe-S scaffold assembly protein, as well as other S acceptor proteins. The protein is Cysteine desulfurase IscS of Pseudomonas fluorescens (strain SBW25).